The chain runs to 268 residues: L-aspartate dehydrogenase (268 aa).

Alanine 125 and asparagine 191 together coordinate NAD(+). Residue histidine 221 is part of the active site.

The protein belongs to the L-aspartate dehydrogenase family.

It carries out the reaction L-aspartate + NADP(+) + H2O = oxaloacetate + NH4(+) + NADPH + H(+). The enzyme catalyses L-aspartate + NAD(+) + H2O = oxaloacetate + NH4(+) + NADH + H(+). The protein operates within cofactor biosynthesis; NAD(+) biosynthesis; iminoaspartate from L-aspartate (dehydrogenase route): step 1/1. Specifically catalyzes the NAD or NADP-dependent dehydrogenation of L-aspartate to iminoaspartate. This is L-aspartate dehydrogenase from Brucella anthropi (strain ATCC 49188 / DSM 6882 / CCUG 24695 / JCM 21032 / LMG 3331 / NBRC 15819 / NCTC 12168 / Alc 37) (Ochrobactrum anthropi).